Consider the following 341-residue polypeptide: Aspartate carbamoyltransferase catalytic subunit (341 aa).

2 residues coordinate carbamoyl phosphate: arginine 89 and threonine 90. L-aspartate is bound at residue lysine 117. Arginine 139, histidine 169, and glutamine 172 together coordinate carbamoyl phosphate. L-aspartate-binding residues include arginine 202 and arginine 257. Positions 298 and 299 each coordinate carbamoyl phosphate.

The protein belongs to the aspartate/ornithine carbamoyltransferase superfamily. ATCase family. Heterododecamer (2C3:3R2) of six catalytic PyrB chains organized as two trimers (C3), and six regulatory PyrI chains organized as three dimers (R2).

It carries out the reaction carbamoyl phosphate + L-aspartate = N-carbamoyl-L-aspartate + phosphate + H(+). It participates in pyrimidine metabolism; UMP biosynthesis via de novo pathway; (S)-dihydroorotate from bicarbonate: step 2/3. Its function is as follows. Catalyzes the condensation of carbamoyl phosphate and aspartate to form carbamoyl aspartate and inorganic phosphate, the committed step in the de novo pyrimidine nucleotide biosynthesis pathway. This chain is Aspartate carbamoyltransferase catalytic subunit, found in Paraburkholderia xenovorans (strain LB400).